A 468-amino-acid polypeptide reads, in one-letter code: 3-isopropylmalate dehydratase large subunit (468 aa).

[4Fe-4S] cluster is bound by residues Cys-349, Cys-409, and Cys-412.

Belongs to the aconitase/IPM isomerase family. LeuC type 1 subfamily. As to quaternary structure, heterodimer of LeuC and LeuD. It depends on [4Fe-4S] cluster as a cofactor.

It catalyses the reaction (2R,3S)-3-isopropylmalate = (2S)-2-isopropylmalate. It functions in the pathway amino-acid biosynthesis; L-leucine biosynthesis; L-leucine from 3-methyl-2-oxobutanoate: step 2/4. Its function is as follows. Catalyzes the isomerization between 2-isopropylmalate and 3-isopropylmalate, via the formation of 2-isopropylmaleate. The sequence is that of 3-isopropylmalate dehydratase large subunit from Shewanella baltica (strain OS185).